The sequence spans 327 residues: Methionyl-tRNA formyltransferase (327 aa).

122–125 (SLLP) contacts (6S)-5,6,7,8-tetrahydrofolate.

It belongs to the Fmt family.

The enzyme catalyses L-methionyl-tRNA(fMet) + (6R)-10-formyltetrahydrofolate = N-formyl-L-methionyl-tRNA(fMet) + (6S)-5,6,7,8-tetrahydrofolate + H(+). Its function is as follows. Attaches a formyl group to the free amino group of methionyl-tRNA(fMet). The formyl group appears to play a dual role in the initiator identity of N-formylmethionyl-tRNA by promoting its recognition by IF2 and preventing the misappropriation of this tRNA by the elongation apparatus. In Ralstonia pickettii (strain 12J), this protein is Methionyl-tRNA formyltransferase.